A 424-amino-acid chain; its full sequence is Folate-like transporter 3 (424 aa).

A glycan (N-linked (GlcNAc...) asparagine) is linked at asparagine 35. Transmembrane regions (helical) follow at residues 55–75, 78–98, 101–119, 136–156, and 164–184; these read VALI…ILII, LSYF…CMQL, LFYG…YIYV, ALLV…GLNW, and IINL…PHVP. The N-linked (GlcNAc...) asparagine glycan is linked to asparagine 254. Helical transmembrane passes span 313 to 333, 361 to 381, and 392 to 412; these read GLLF…CYII, LFGI…AIVI, and FVVY…IFGI.

The protein belongs to the reduced folate carrier (RFC) transporter (TC 2.A.48) family.

It is found in the membrane. The sequence is that of Folate-like transporter 3 (folt-3) from Caenorhabditis elegans.